Reading from the N-terminus, the 157-residue chain is V-type proton ATPase 16 kDa proteolipid subunit c (157 aa).

The Lumenal portion of the chain corresponds to 1 to 10; the sequence is MALPEENPVY. The helical transmembrane segment at 11-33 threads the bilayer; that stretch reads GPFFGVMGAAAAIIFSALGAAYG. Residues 34–55 are Cytoplasmic-facing; sequence TAKSGTGIAAMSVMRPELIMKS. A helical membrane pass occupies residues 56-76; the sequence is IIPVVMAGIIAIYGLVVAVLI. The Lumenal segment spans residues 77 to 94; sequence AGSLDTPTKYSLYKGFIH. Residues 95-116 form a helical membrane-spanning segment; that stretch reads LGAGLAVGFSGLAAGFAIGIVG. Topologically, residues 117–128 are cytoplasmic; sequence DAGVRGTAQQPR. A helical transmembrane segment spans residues 129 to 154; sequence LFVGMILILIFAEVLGLYGLIVAIYL. The Lumenal portion of the chain corresponds to 155 to 157; that stretch reads YTK.

The protein belongs to the V-ATPase proteolipid subunit family. As to quaternary structure, V-ATPase is a heteromultimeric enzyme made up of two complexes: the ATP-hydrolytic V1 complex and the proton translocation V0 complex. The V1 complex consists of three catalytic AB heterodimers that form a heterohexamer, three peripheral stalks each consisting of EG heterodimers, one central rotor including subunits D and F, and the regulatory subunits C and H. The proton translocation complex V0 consists of the proton transport subunit a, a ring of proteolipid subunits c9c'', rotary subunit d, subunits e and f, and the accessory subunits VhaAC45 and ATP6AP2.

It localises to the membrane. Functionally, proton-conducting pore forming subunit of the V0 complex of vacuolar(H+)-ATPase (V-ATPase), a multisubunit enzyme composed of a peripheral complex (V1) that hydrolyzes ATP and a membrane integral complex (V0) that translocates protons. V-ATPase is responsible for acidifying and maintaining the pH of intracellular compartments and in some cell types, is targeted to the plasma membrane, where it is responsible for acidifying the extracellular environment. The protein is V-type proton ATPase 16 kDa proteolipid subunit c of Aedes aegypti (Yellowfever mosquito).